A 595-amino-acid polypeptide reads, in one-letter code: Apolipoprotein N-acyltransferase 2 (595 aa).

5 helical membrane passes run 30–50 (FLAF…FGFF), 63–83 (LFFH…HWII), 95–115 (VVAI…FPIF), 167–187 (AEIT…YTLF), and 210–230 (FITL…FLFK). One can recognise a CN hydrolase domain in the interval 241–555 (LNVLIVQPDA…AEALSETIDV (315 aa)). The Proton acceptor role is filled by Glu-293. Residue Lys-372 is part of the active site. Residue Cys-463 is the Nucleophile of the active site. A helical membrane pass occupies residues 569 to 589 (LIPWLMLFLTGIYYLNLLIGI).

It belongs to the CN hydrolase family. Apolipoprotein N-acyltransferase subfamily.

It is found in the cell inner membrane. It carries out the reaction N-terminal S-1,2-diacyl-sn-glyceryl-L-cysteinyl-[lipoprotein] + a glycerophospholipid = N-acyl-S-1,2-diacyl-sn-glyceryl-L-cysteinyl-[lipoprotein] + a 2-acyl-sn-glycero-3-phospholipid + H(+). The protein operates within protein modification; lipoprotein biosynthesis (N-acyl transfer). Its function is as follows. Catalyzes the phospholipid dependent N-acylation of the N-terminal cysteine of apolipoprotein, the last step in lipoprotein maturation. In Leptospira interrogans serogroup Icterohaemorrhagiae serovar Lai (strain 56601), this protein is Apolipoprotein N-acyltransferase 2.